A 270-amino-acid chain; its full sequence is Diaminopimelate epimerase (270 aa).

Substrate is bound by residues asparagine 15, glutamine 49, and asparagine 66. The active-site Proton donor is the cysteine 75. Substrate contacts are provided by residues 76–77 (GN), asparagine 155, asparagine 187, and 204–205 (ER). The active-site Proton acceptor is the cysteine 213. 214-215 (GS) is a substrate binding site.

It belongs to the diaminopimelate epimerase family. Homodimer.

The protein resides in the cytoplasm. It carries out the reaction (2S,6S)-2,6-diaminopimelate = meso-2,6-diaminopimelate. Its pathway is amino-acid biosynthesis; L-lysine biosynthesis via DAP pathway; DL-2,6-diaminopimelate from LL-2,6-diaminopimelate: step 1/1. In terms of biological role, catalyzes the stereoinversion of LL-2,6-diaminopimelate (L,L-DAP) to meso-diaminopimelate (meso-DAP), a precursor of L-lysine and an essential component of the bacterial peptidoglycan. The sequence is that of Diaminopimelate epimerase from Rickettsia massiliae (strain Mtu5).